The chain runs to 212 residues: GrpE protein homolog, mitochondrial (212 aa).

This sequence belongs to the GrpE family. In terms of assembly, component of the PAM complex, at least composed of mtHsp70, MGE1, TIM44, PAM16, PAM17 and PAM18.

The protein resides in the mitochondrion matrix. Functionally, essential component of the PAM complex, a complex required for the translocation of transit peptide-containing proteins from the inner membrane into the mitochondrial matrix in an ATP-dependent manner. Seems to control the nucleotide-dependent binding of SSC1 to substrate proteins. The sequence is that of GrpE protein homolog, mitochondrial (mge1) from Eremothecium gossypii (strain ATCC 10895 / CBS 109.51 / FGSC 9923 / NRRL Y-1056) (Yeast).